The following is a 156-amino-acid chain: Small ribosomal subunit protein uS7 (156 aa).

It belongs to the universal ribosomal protein uS7 family. As to quaternary structure, part of the 30S ribosomal subunit. Contacts proteins S9 and S11.

In terms of biological role, one of the primary rRNA binding proteins, it binds directly to 16S rRNA where it nucleates assembly of the head domain of the 30S subunit. Is located at the subunit interface close to the decoding center, probably blocks exit of the E-site tRNA. This Syntrophobacter fumaroxidans (strain DSM 10017 / MPOB) protein is Small ribosomal subunit protein uS7.